The chain runs to 117 residues: Iron-sulfur cluster insertion protein ErpA (117 aa).

The iron-sulfur cluster site is built by Cys45, Cys109, and Cys111.

Belongs to the HesB/IscA family. In terms of assembly, homodimer. The cofactor is iron-sulfur cluster.

Functionally, required for insertion of 4Fe-4S clusters for at least IspG. The protein is Iron-sulfur cluster insertion protein ErpA of Ruthia magnifica subsp. Calyptogena magnifica.